Reading from the N-terminus, the 348-residue chain is Abnormal cell lineage protein 44 (348 aa).

The N-terminal stretch at 1–25 is a signal peptide; it reads MRAAPFDFFFQSTALSTFFILCSLA. Intrachain disulfides connect Cys-91–Cys-102, Cys-141–Cys-149, Cys-151–Cys-165, Cys-213–Cys-227, Cys-215–Cys-222, Cys-272–Cys-299, Cys-282–Cys-294, Cys-298–Cys-338, Cys-314–Cys-329, Cys-316–Cys-326, and Cys-321–Cys-322. A lipid anchor (O-palmitoleoyl serine; by mom-1) is attached at Ser-219. Asn-286 carries an N-linked (GlcNAc...) asparagine glycan.

It belongs to the Wnt family. Palmitoleoylation is required for efficient binding to frizzled receptors. Depalmitoleoylation leads to Wnt signaling pathway inhibition. As to expression, expressed in the tail hypodermis.

The protein localises to the secreted. It is found in the extracellular space. It localises to the extracellular matrix. Its function is as follows. Ligand for members of the frizzled family of seven transmembrane receptors. Affects male tail development, vulval precursor cell specification and egg laying. Involved in morphogenesis by influencing polarity of asymmetric cell divisions of the B, U, and F cells in the male, and the T cell in males and hermaphrodites. Controls spindle orientation in B-gamma cell division during male copulatory spicule development. Involved in specification of the P7.p lineage during vulval development. Has a role in providing polarity and default lin-17 localization in axon development and positioning of neuromuscular synapses in DA9 regions by negatively regulating synaptogenesis. Plays a role in motorneuron development by promoting the extension of the anterior neurite of ventral D-type GABAergic motorneurons along the anterior-posterior axis of the ventral nerve cord. Positively regulates cilium position and dendrite morphogenesis in postembryonic PQR gas-sensing neurons. This is likely through regulating the localization of grdn-1 to the distal dendrites of PQR sensory neurons. This Caenorhabditis elegans protein is Abnormal cell lineage protein 44.